Here is a 361-residue protein sequence, read N- to C-terminus: tRNA/tmRNA (uracil-C(5))-methyltransferase (361 aa).

Residues Gln-185, Tyr-213, Asn-218, Glu-234, and Asp-294 each coordinate S-adenosyl-L-methionine. Residue Cys-319 is the Nucleophile of the active site. Residue Glu-353 is the Proton acceptor of the active site.

This sequence belongs to the class I-like SAM-binding methyltransferase superfamily. RNA M5U methyltransferase family. TrmA subfamily.

The enzyme catalyses uridine(54) in tRNA + S-adenosyl-L-methionine = 5-methyluridine(54) in tRNA + S-adenosyl-L-homocysteine + H(+). It carries out the reaction uridine(341) in tmRNA + S-adenosyl-L-methionine = 5-methyluridine(341) in tmRNA + S-adenosyl-L-homocysteine + H(+). Its function is as follows. Dual-specificity methyltransferase that catalyzes the formation of 5-methyluridine at position 54 (m5U54) in all tRNAs, and that of position 341 (m5U341) in tmRNA (transfer-mRNA). The polypeptide is tRNA/tmRNA (uracil-C(5))-methyltransferase (Pseudomonas putida (strain GB-1)).